The sequence spans 417 residues: Tryptophan decarboxylase (417 aa).

The residue at position 263 (K263) is an N6-(pyridoxal phosphate)lysine.

This sequence belongs to the group II decarboxylase family. Pyridoxal 5'-phosphate serves as cofactor.

Its subcellular location is the cytoplasm. The enzyme catalyses L-tryptophan + H(+) = tryptamine + CO2. With respect to regulation, inhibited by (S)-alpha-fluoromethyltryptophan. Catalyzes the decarboxylation of tryptophan to tryptamine. Tryptamine is a neurotransmitter that induces the release of serotonin, which is suggested to modulate gastrointestinal motility. Therefore, the tryptophan decarboxylase from the gut bacteria Clostridium sporogenes (strain ATCC 15579) may influence host brain and behavior. Has weak activity with tyrosine. Activity against phenylalanine is undetectable. The polypeptide is Tryptophan decarboxylase (Clostridium sporogenes (strain ATCC 15579)).